The chain runs to 242 residues: Probable 2-phosphosulfolactate phosphatase (242 aa).

It belongs to the ComB family. Mg(2+) serves as cofactor.

It catalyses the reaction (2R)-O-phospho-3-sulfolactate + H2O = (2R)-3-sulfolactate + phosphate. The chain is Probable 2-phosphosulfolactate phosphatase from Prochlorococcus marinus (strain NATL2A).